Here is a 208-residue protein sequence, read N- to C-terminus: FMN-dependent NADH:quinone oxidoreductase (208 aa).

Residues 17–19 (SNS), 99–102 (MWNL), and 143–146 (SRGG) each bind FMN.

The protein belongs to the azoreductase type 1 family. As to quaternary structure, homodimer. The cofactor is FMN.

The enzyme catalyses 2 a quinone + NADH + H(+) = 2 a 1,4-benzosemiquinone + NAD(+). The catalysed reaction is N,N-dimethyl-1,4-phenylenediamine + anthranilate + 2 NAD(+) = 2-(4-dimethylaminophenyl)diazenylbenzoate + 2 NADH + 2 H(+). Its function is as follows. Quinone reductase that provides resistance to thiol-specific stress caused by electrophilic quinones. Also exhibits azoreductase activity. Catalyzes the reductive cleavage of the azo bond in aromatic azo compounds to the corresponding amines. In Staphylococcus aureus (strain bovine RF122 / ET3-1), this protein is FMN-dependent NADH:quinone oxidoreductase.